Here is a 600-residue protein sequence, read N- to C-terminus: Copine-A (600 aa).

C2 domains are found at residues 1–111 (MNLK…TVCL) and 116–246 (KSGK…NVIN). Ca(2+) is bound by residues D23, D29, D82, D84, D89, D151, D158, D215, D217, and D223. Residues 286–503 (NLIVGIDCTA…ELAAEVLREI (218 aa)) enclose the VWFA domain. The span at 535 to 549 (YDNPTTTTTATSPST) shows a compositional bias: low complexity. A disordered region spans residues 535 to 583 (YDNPTTTTTATSPSTGIDLNKGSNVGLNLTKTESSPSPSGGAGIDLNKG). The span at 555–572 (KGSNVGLNLTKTESSPSP) shows a compositional bias: polar residues.

The protein belongs to the copine family. The cofactor is Ca(2+).

Its subcellular location is the cytoplasm. It is found in the membrane. Required for cytokinesis, contractile vacuole function and development. In Dictyostelium discoideum (Social amoeba), this protein is Copine-A (cpnA).